The following is a 476-amino-acid chain: Glutamate mutase epsilon subunit (476 aa).

Arg-62 lines the L-glutamate pocket. Adenosylcob(III)alamin is bound at residue Gly-64. Arg-96 is an L-glutamate binding site. Adenosylcob(III)alamin is bound at residue Asn-119. L-glutamate contacts are provided by residues Arg-145–His-146, Glu-167, and Tyr-173. Pro-176 lines the adenosylcob(III)alamin pocket. Tyr-177 lines the L-glutamate pocket. Adenosylcob(III)alamin-binding residues include Phe-289, Lys-318, and Glu-322.

Belongs to the methylaspartate mutase GlmE subunit family. As to quaternary structure, heterotetramer composed of 2 epsilon subunits (GlmE) and 2 sigma subunits (GlmS). GlmE exists as a homodimer and GlmS as a monomer. Adenosylcob(III)alamin is required as a cofactor.

It catalyses the reaction (2S,3S)-3-methyl-L-aspartate = L-glutamate. It participates in amino-acid degradation; L-glutamate degradation via mesaconate pathway; acetate and pyruvate from L-glutamate: step 1/4. Functionally, catalyzes the carbon skeleton rearrangement of L-glutamate to L-threo-3-methylaspartate ((2S,3S)-3-methylaspartate). This is Glutamate mutase epsilon subunit from Halobacterium salinarum (strain ATCC 700922 / JCM 11081 / NRC-1) (Halobacterium halobium).